The following is a 157-amino-acid chain: Small ribosomal subunit protein uS9 (157 aa).

The protein belongs to the universal ribosomal protein uS9 family.

This Caulobacter sp. (strain K31) protein is Small ribosomal subunit protein uS9.